We begin with the raw amino-acid sequence, 24 residues long: Potassium channel toxin alpha-KTx 6 OcyKTx5 (24 aa).

An intrachain disulfide couples C3 to C24.

The protein belongs to the short scorpion toxin superfamily. Potassium channel inhibitor family. Alpha-KTx 06 subfamily. In terms of tissue distribution, expressed by the venom gland.

It is found in the secreted. Functionally, blocks voltage-gated potassium channels. In Opisthacanthus cayaporum (South American scorpion), this protein is Potassium channel toxin alpha-KTx 6 OcyKTx5.